The chain runs to 279 residues: Energy-coupling factor transporter ATP-binding protein EcfA1 (279 aa).

Positions 6–240 (ISVDHLTYQY…GTQLVEMGLD (235 aa)) constitute an ABC transporter domain. 40 to 47 (GHNGSGKS) serves as a coordination point for ATP.

The protein belongs to the ABC transporter superfamily. Energy-coupling factor EcfA family. Forms a stable energy-coupling factor (ECF) transporter complex composed of 2 membrane-embedded substrate-binding proteins (S component), 2 ATP-binding proteins (A component) and 2 transmembrane proteins (T component).

It localises to the cell membrane. Functionally, ATP-binding (A) component of a common energy-coupling factor (ECF) ABC-transporter complex. Unlike classic ABC transporters this ECF transporter provides the energy necessary to transport a number of different substrates. This chain is Energy-coupling factor transporter ATP-binding protein EcfA1, found in Levilactobacillus brevis (strain ATCC 367 / BCRC 12310 / CIP 105137 / JCM 1170 / LMG 11437 / NCIMB 947 / NCTC 947) (Lactobacillus brevis).